We begin with the raw amino-acid sequence, 325 residues long: Replication factor C small subunit (325 aa).

47 to 54 (GPPGTGKT) contacts ATP.

The protein belongs to the activator 1 small subunits family. RfcS subfamily. Heteromultimer composed of small subunits (RfcS) and large subunits (RfcL).

Its function is as follows. Part of the RFC clamp loader complex which loads the PCNA sliding clamp onto DNA. This chain is Replication factor C small subunit, found in Aeropyrum pernix (strain ATCC 700893 / DSM 11879 / JCM 9820 / NBRC 100138 / K1).